A 971-amino-acid polypeptide reads, in one-letter code: Exportin-2 (971 aa).

The region spanning 29–102 (AEKFLESVEG…KANIVNLMLS (74 aa)) is the Importin N-terminal domain.

It belongs to the XPO2/CSE1 family. In terms of assembly, interacts with cftr.

It is found in the cytoplasm. Its subcellular location is the nucleus. Functionally, export receptor for importin alpha. Mediates importin-alpha re-export from the nucleus to the cytoplasm after import substrates have been released into the nucleoplasm. Negatively regulates fluid secretion and plays a role in fluid homeostasis by down-regulating cftr activity. The protein is Exportin-2 (cse1l) of Pagrus major (Red sea bream).